Consider the following 431-residue polypeptide: 23S rRNA (uracil(1939)-C(5))-methyltransferase RlmD (431 aa).

A TRAM domain is found at 8 to 68; the sequence is KRRVTTRQII…SKYSRGQVKR (61 aa). The [4Fe-4S] cluster site is built by Cys-81, Cys-87, Cys-90, and Cys-162. Residues Gln-265, Phe-294, Asn-299, Glu-315, Asn-342, and Asp-363 each coordinate S-adenosyl-L-methionine. Cys-389 (nucleophile) is an active-site residue.

This sequence belongs to the class I-like SAM-binding methyltransferase superfamily. RNA M5U methyltransferase family. RlmD subfamily.

It carries out the reaction uridine(1939) in 23S rRNA + S-adenosyl-L-methionine = 5-methyluridine(1939) in 23S rRNA + S-adenosyl-L-homocysteine + H(+). Its function is as follows. Catalyzes the formation of 5-methyl-uridine at position 1939 (m5U1939) in 23S rRNA. The chain is 23S rRNA (uracil(1939)-C(5))-methyltransferase RlmD from Enterobacter sp. (strain 638).